The chain runs to 448 residues: Probable glycine dehydrogenase (decarboxylating) subunit 1 (448 aa).

The protein belongs to the GcvP family. N-terminal subunit subfamily. The glycine cleavage system is composed of four proteins: P, T, L and H. In this organism, the P 'protein' is a heterodimer of two subunits.

The enzyme catalyses N(6)-[(R)-lipoyl]-L-lysyl-[glycine-cleavage complex H protein] + glycine + H(+) = N(6)-[(R)-S(8)-aminomethyldihydrolipoyl]-L-lysyl-[glycine-cleavage complex H protein] + CO2. Its function is as follows. The glycine cleavage system catalyzes the degradation of glycine. The P protein binds the alpha-amino group of glycine through its pyridoxal phosphate cofactor; CO(2) is released and the remaining methylamine moiety is then transferred to the lipoamide cofactor of the H protein. This chain is Probable glycine dehydrogenase (decarboxylating) subunit 1, found in Staphylococcus aureus (strain Mu3 / ATCC 700698).